The following is a 470-amino-acid chain: MTSRELYTSSYKKIFGDWGRSSSLLYTTNSSSSTRSQSYRPREAYTSNISSYRKVSRSPGHLSSAQDHFDLSQSTALSNELKIVRTNEKEQLQGLNDRFVTYIEKVHHLEQQNKLLESEVTLLRQKHSEPSRLSHIYEQEIRELRSKLEEQEQDKDQAQLDYEHLGACLEQLKLKLEQESARREEAEDVMKNYRKDLDQATLNRLQLEKKVESLLDEIAFLRKVHEEEIAELQASVQEAQISVEMDVVSKPDLTAALKEIRMQYEVLSARNQQSSEEWYQAKIANVSLEASRNNDSVRQAKEEITEYRRQLQARTLEIDALRSANESLERQLQEAEDRSNEEMSHLQDTIGQLDNALRTTKEEMARHLREYQDLLNVKMALDIEIAAYRKLLEGEETRLTSVGGGSMFGIGYPFSSGSYSGGRSSTTSTISIRKEEKKESPEGGKGGSSGQPKTSKPGDQEKISQKAAAN.

Residues 1 to 91 (MTSRELYTSS…KIVRTNEKEQ (91 aa)) form a head region. The IF rod domain maps to 88-399 (EKEQLQGLND…KLLEGEETRL (312 aa)). The interval 91–123 (QLQGLNDRFVTYIEKVHHLEQQNKLLESEVTLL) is coil 1A. Residues 121–136 (TLLRQKHSEPSRLSHI) form a linker 1 region. Residues 137–232 (YEQEIRELRS…KVHEEEIAEL (96 aa)) form a coil 1B region. The tract at residues 233-251 (QASVQEAQISVEMDVVSKP) is linker 12. Residues 252 to 270 (DLTAALKEIRMQYEVLSAR) are coil 2A. Positions 271-279 (NQQSSEEWY) are linker 2. Residues 280 to 395 (QAKIANVSLE…AAYRKLLEGE (116 aa)) are coil 2B. Positions 396-470 (ETRLTSVGGG…EKISQKAAAN (75 aa)) are tail. Residues 414 to 431 (FSSGSYSGGRSSTTSTIS) show a composition bias toward low complexity. Residues 414-470 (FSSGSYSGGRSSTTSTISIRKEEKKESPEGGKGGSSGQPKTSKPGDQEKISQKAAAN) form a disordered region. The segment covering 432 to 442 (IRKEEKKESPE) has biased composition (basic and acidic residues).

Belongs to the intermediate filament family. Nervous system; in axons in the PNS and in small perikarya in the dorsal root ganglion.

This chain is Low molecular weight neuronal intermediate filament, found in Xenopus laevis (African clawed frog).